The following is a 142-amino-acid chain: Hemoglobin subunit alpha-A (142 aa).

Residues Val2–Arg142 enclose the Globin domain. An O2-binding site is contributed by His59. His88 serves as a coordination point for heme b.

The protein belongs to the globin family. In terms of assembly, heterotetramer of two alpha chains and two beta chains. As to expression, red blood cells.

In terms of biological role, involved in oxygen transport from the lung to the various peripheral tissues. The protein is Hemoglobin subunit alpha-A (HBAA) of Otolemur crassicaudatus (Brown greater galago).